The following is a 463-amino-acid chain: MTNVITRFAPSPTGFLHIGSARTALFNYLFARHNNGKFLLRIEDTDKERSTKAAVDAIFSGLKWLGLDWDAEVIFQSKRNDLYKKAALRLLKEGKAYYCFTSQEEIEKQRQKALENKQHFIFNSEWRDKEPDAYPTDVKPVIRLKTPREGRITIHDTLQGEVVIENSHIDDMVLLRADGTATYMLAVVADDHDMGITHIIRGDDHLTNAARQIAIYQALGYEVPSMTHIPLIHGADGAKLSKRHGALGVDAYKNMGYLPESLCNYLLRLGWSHGNDEIISMTQAIEWFNLDSLGKSPSRLDFAKMNSLNAYYLRMLDNDTLTAKTVEILKQNYKISDKEVSYIKQAMSSLLVRSETLLDLAQLAQIYLVDSPIVYNQDAKEIIENCNKDLIKQVTEGLNKIEKFDKESVQNKFKEIAAANDLKLSDIMKPVRALITGMDASPSVFAIAEILGKENILKRLETI.

The 'HIGH' region signature appears at 10–20 (PSPTGFLHIGS). The short motif at 239-243 (KLSKR) is the 'KMSKS' region element. Residue Lys-242 coordinates ATP.

The protein belongs to the class-I aminoacyl-tRNA synthetase family. Glutamate--tRNA ligase type 1 subfamily. As to quaternary structure, monomer.

It localises to the cytoplasm. It catalyses the reaction tRNA(Glu) + L-glutamate + ATP = L-glutamyl-tRNA(Glu) + AMP + diphosphate. Functionally, catalyzes the attachment of glutamate to tRNA(Glu) in a two-step reaction: glutamate is first activated by ATP to form Glu-AMP and then transferred to the acceptor end of tRNA(Glu). In Rickettsia akari (strain Hartford), this protein is Glutamate--tRNA ligase 2.